The primary structure comprises 253 residues: Glutamate racemase (253 aa).

Substrate contacts are provided by residues 7–8 (DS) and 39–40 (YG). Cys-70 (proton donor/acceptor) is an active-site residue. Position 71–72 (71–72 (NT)) interacts with substrate. Catalysis depends on Cys-180, which acts as the Proton donor/acceptor. A substrate-binding site is contributed by 181 to 182 (TH).

Belongs to the aspartate/glutamate racemases family.

It carries out the reaction L-glutamate = D-glutamate. It participates in cell wall biogenesis; peptidoglycan biosynthesis. Functionally, provides the (R)-glutamate required for cell wall biosynthesis. The polypeptide is Glutamate racemase (Halothermothrix orenii (strain H 168 / OCM 544 / DSM 9562)).